A 329-amino-acid polypeptide reads, in one-letter code: Acetyl-coenzyme A carboxylase carboxyl transferase subunit alpha (329 aa).

Positions 40–294 (QLETLAARRR…REALERNLSE (255 aa)) constitute a CoA carboxyltransferase C-terminal domain.

The protein belongs to the AccA family. In terms of assembly, acetyl-CoA carboxylase is a heterohexamer composed of biotin carboxyl carrier protein (AccB), biotin carboxylase (AccC) and two subunits each of ACCase subunit alpha (AccA) and ACCase subunit beta (AccD).

It localises to the cytoplasm. The enzyme catalyses N(6)-carboxybiotinyl-L-lysyl-[protein] + acetyl-CoA = N(6)-biotinyl-L-lysyl-[protein] + malonyl-CoA. It functions in the pathway lipid metabolism; malonyl-CoA biosynthesis; malonyl-CoA from acetyl-CoA: step 1/1. Component of the acetyl coenzyme A carboxylase (ACC) complex. First, biotin carboxylase catalyzes the carboxylation of biotin on its carrier protein (BCCP) and then the CO(2) group is transferred by the carboxyltransferase to acetyl-CoA to form malonyl-CoA. The protein is Acetyl-coenzyme A carboxylase carboxyl transferase subunit alpha of Synechococcus sp. (strain CC9311).